The primary structure comprises 248 residues: uncharacterized protein (248 aa).

8–32 (EVALVTGASSGIGKAIALELASAGL) is a binding site for NADP(+). Ser134 provides a ligand contact to substrate. The active-site Proton acceptor is the Tyr147.

This sequence belongs to the short-chain dehydrogenases/reductases (SDR) family.

This is an uncharacterized protein from Sinorhizobium fredii (strain NBRC 101917 / NGR234).